The following is a 146-amino-acid chain: D-aminoacyl-tRNA deacylase (146 aa).

The short motif at G138–P139 is the Gly-cisPro motif, important for rejection of L-amino acids element.

This sequence belongs to the DTD family. As to quaternary structure, homodimer.

It is found in the cytoplasm. It carries out the reaction glycyl-tRNA(Ala) + H2O = tRNA(Ala) + glycine + H(+). It catalyses the reaction a D-aminoacyl-tRNA + H2O = a tRNA + a D-alpha-amino acid + H(+). In terms of biological role, an aminoacyl-tRNA editing enzyme that deacylates mischarged D-aminoacyl-tRNAs. Also deacylates mischarged glycyl-tRNA(Ala), protecting cells against glycine mischarging by AlaRS. Acts via tRNA-based rather than protein-based catalysis; rejects L-amino acids rather than detecting D-amino acids in the active site. By recycling D-aminoacyl-tRNA to D-amino acids and free tRNA molecules, this enzyme counteracts the toxicity associated with the formation of D-aminoacyl-tRNA entities in vivo and helps enforce protein L-homochirality. This is D-aminoacyl-tRNA deacylase from Stenotrophomonas maltophilia (strain K279a).